The following is a 380-amino-acid chain: MPASPQSSEMFIGLMSGTSMDGADGVLVDFSGAQPAVLAAAHTPFPAPLREAFGALQQPGDDEIHREALASNGLARVYADCVATLLRTASVTADRVAAIGAHGQTIRHRPGQYDGTGYTRQSQHPALLAELTGIDVVADFRSRDVAAGGQGAPLVPAVHAALFGAADETRVVCNIGGISNISILPAAGTGRPVTGFDCGPGNALLDDWIHRHRGTPYDDGGAWAASGKVDESLLDQMLAEPYFRALPPKSTGRDLFHPGWLQSLLDTYGNAQPQPVDIQATLATLTATAIAQDVQRYAPEARRLIVCGGGAHNDFVMTTMANQLPGVLVQTTGDFGVPVSQVEAIAFAWLARQCTRRAPGNVATVTGAAGPRVLGAIYPR.

17–24 (GTSMDGAD) is a binding site for ATP.

This sequence belongs to the anhydro-N-acetylmuramic acid kinase family.

The catalysed reaction is 1,6-anhydro-N-acetyl-beta-muramate + ATP + H2O = N-acetyl-D-muramate 6-phosphate + ADP + H(+). The protein operates within amino-sugar metabolism; 1,6-anhydro-N-acetylmuramate degradation. It functions in the pathway cell wall biogenesis; peptidoglycan recycling. Catalyzes the specific phosphorylation of 1,6-anhydro-N-acetylmuramic acid (anhMurNAc) with the simultaneous cleavage of the 1,6-anhydro ring, generating MurNAc-6-P. Is required for the utilization of anhMurNAc either imported from the medium or derived from its own cell wall murein, and thus plays a role in cell wall recycling. The sequence is that of Anhydro-N-acetylmuramic acid kinase from Cupriavidus metallidurans (strain ATCC 43123 / DSM 2839 / NBRC 102507 / CH34) (Ralstonia metallidurans).